The sequence spans 186 residues: MSVREVYQKIEPRMKKTIEAFQHEIASIRTGKATTALLDRVKVEAYGQQMPLKQVGNISVLDVHTLIVQIWDKSMVSATERAIRDANLGLNPAADGQNIRVSIPPLTEERRKEFVKLTKKFGEDSKVSLRNLRRDMIQEIEKLEKSKAISEDDKNKGKKDADEMLHKFEKQLTELIVHKEKEIMEV.

This sequence belongs to the RRF family.

It is found in the cytoplasm. In terms of biological role, responsible for the release of ribosomes from messenger RNA at the termination of protein biosynthesis. May increase the efficiency of translation by recycling ribosomes from one round of translation to another. The sequence is that of Ribosome-recycling factor from Pelodictyon phaeoclathratiforme (strain DSM 5477 / BU-1).